The chain runs to 82 residues: uncharacterized protein (82 aa).

A run of 3 helical transmembrane segments spans residues 4–26 (IAVL…AGHF), 31–50 (FWVA…VTLA), and 55–77 (SFIF…TLFL).

The protein localises to the cell membrane. This is an uncharacterized protein from Bacillus subtilis (strain 168).